A 304-amino-acid chain; its full sequence is Capsid protein (304 aa).

Composition is skewed to basic and acidic residues over residues 1–24 (MGDS…REAR) and 32–54 (FEGK…EMSL). Residues 1-54 (MGDSTKKAETAKDEGTSQERREARPLPTAADFEGKDTSENTDGRAADADGEMSL) form a disordered region.

Belongs to the potexviruses coat protein family.

Its subcellular location is the virion. Functionally, required for genome encapsidation. Forms ribonucleoprotein complexes along with TGB1 helicase and viral RNA. The polypeptide is Capsid protein (Potato virus M (strain Russian) (PVM)).